We begin with the raw amino-acid sequence, 108 residues long: UPF0060 membrane protein DSY4629 (108 aa).

4 consecutive transmembrane segments (helical) span residues 5–25, 31–51, 60–80, and 86–106; these read IILF…VWLW, PFWY…IPTL, VYAA…WGID, and NYDW…LWAP.

The protein belongs to the UPF0060 family.

Its subcellular location is the cell membrane. The protein is UPF0060 membrane protein DSY4629 of Desulfitobacterium hafniense (strain Y51).